Reading from the N-terminus, the 277-residue chain is ATP synthase subunit delta (277 aa).

The protein belongs to the ATPase delta chain family. In terms of assembly, F-type ATPases have 2 components, F(1) - the catalytic core - and F(0) - the membrane proton channel. F(1) has five subunits: alpha(3), beta(3), gamma(1), delta(1), epsilon(1). F(0) has three main subunits: a(1), b(2) and c(10-14). The alpha and beta chains form an alternating ring which encloses part of the gamma chain. F(1) is attached to F(0) by a central stalk formed by the gamma and epsilon chains, while a peripheral stalk is formed by the delta and b chains.

It is found in the cell membrane. In terms of biological role, f(1)F(0) ATP synthase produces ATP from ADP in the presence of a proton or sodium gradient. F-type ATPases consist of two structural domains, F(1) containing the extramembraneous catalytic core and F(0) containing the membrane proton channel, linked together by a central stalk and a peripheral stalk. During catalysis, ATP synthesis in the catalytic domain of F(1) is coupled via a rotary mechanism of the central stalk subunits to proton translocation. This protein is part of the stalk that links CF(0) to CF(1). It either transmits conformational changes from CF(0) to CF(1) or is implicated in proton conduction. In Frankia alni (strain DSM 45986 / CECT 9034 / ACN14a), this protein is ATP synthase subunit delta.